The primary structure comprises 346 residues: Probable dual-specificity RNA methyltransferase RlmN (346 aa).

The Proton acceptor role is filled by E76. In terms of domain architecture, Radical SAM core spans 97–329 (SYDRATICVS…TFIRKPRGRD (233 aa)). A disulfide bridge links C104 with C334. C111, C115, and C118 together coordinate [4Fe-4S] cluster. S-adenosyl-L-methionine contacts are provided by residues 162 to 163 (GE), S192, 215 to 217 (SLN), and N291. Catalysis depends on C334, which acts as the S-methylcysteine intermediate.

The protein belongs to the radical SAM superfamily. RlmN family. It depends on [4Fe-4S] cluster as a cofactor.

The protein localises to the cytoplasm. It catalyses the reaction adenosine(2503) in 23S rRNA + 2 reduced [2Fe-2S]-[ferredoxin] + 2 S-adenosyl-L-methionine = 2-methyladenosine(2503) in 23S rRNA + 5'-deoxyadenosine + L-methionine + 2 oxidized [2Fe-2S]-[ferredoxin] + S-adenosyl-L-homocysteine. It carries out the reaction adenosine(37) in tRNA + 2 reduced [2Fe-2S]-[ferredoxin] + 2 S-adenosyl-L-methionine = 2-methyladenosine(37) in tRNA + 5'-deoxyadenosine + L-methionine + 2 oxidized [2Fe-2S]-[ferredoxin] + S-adenosyl-L-homocysteine. Its function is as follows. Specifically methylates position 2 of adenine 2503 in 23S rRNA and position 2 of adenine 37 in tRNAs. The polypeptide is Probable dual-specificity RNA methyltransferase RlmN (Koribacter versatilis (strain Ellin345)).